We begin with the raw amino-acid sequence, 87 residues long: Small ribosomal subunit protein bS18 (87 aa).

The protein belongs to the bacterial ribosomal protein bS18 family. As to quaternary structure, part of the 30S ribosomal subunit. Forms a tight heterodimer with protein bS6.

In terms of biological role, binds as a heterodimer with protein bS6 to the central domain of the 16S rRNA, where it helps stabilize the platform of the 30S subunit. This Mesomycoplasma hyopneumoniae (strain 232) (Mycoplasma hyopneumoniae) protein is Small ribosomal subunit protein bS18.